Reading from the N-terminus, the 186-residue chain is Pyridoxal 5'-phosphate synthase subunit PdxT (186 aa).

46 to 48 is a binding site for L-glutamine; sequence GES. Cys-75 serves as the catalytic Nucleophile. Residues Arg-101 and 129–130 contribute to the L-glutamine site; that span reads IR. Residues His-165 and Glu-167 each act as charge relay system in the active site.

The protein belongs to the glutaminase PdxT/SNO family. As to quaternary structure, in the presence of PdxS, forms a dodecamer of heterodimers. Only shows activity in the heterodimer.

It catalyses the reaction aldehydo-D-ribose 5-phosphate + D-glyceraldehyde 3-phosphate + L-glutamine = pyridoxal 5'-phosphate + L-glutamate + phosphate + 3 H2O + H(+). The enzyme catalyses L-glutamine + H2O = L-glutamate + NH4(+). The protein operates within cofactor biosynthesis; pyridoxal 5'-phosphate biosynthesis. Its function is as follows. Catalyzes the hydrolysis of glutamine to glutamate and ammonia as part of the biosynthesis of pyridoxal 5'-phosphate. The resulting ammonia molecule is channeled to the active site of PdxS. The sequence is that of Pyridoxal 5'-phosphate synthase subunit PdxT from Staphylococcus aureus (strain Mu3 / ATCC 700698).